A 289-amino-acid chain; its full sequence is Shikimate dehydrogenase (NADP(+)) (289 aa).

Shikimate is bound by residues 22–24 (SRS) and Thr69. The active-site Proton acceptor is the Lys73. Position 85 (Glu85) interacts with NADP(+). Shikimate-binding residues include Asn94 and Asp109. NADP(+) contacts are provided by residues 134–138 (GAGGA), 158–163 (NRTLSR), and Ile226. Tyr228 provides a ligand contact to shikimate. Gly249 is an NADP(+) binding site.

This sequence belongs to the shikimate dehydrogenase family. In terms of assembly, homodimer.

It catalyses the reaction shikimate + NADP(+) = 3-dehydroshikimate + NADPH + H(+). It participates in metabolic intermediate biosynthesis; chorismate biosynthesis; chorismate from D-erythrose 4-phosphate and phosphoenolpyruvate: step 4/7. Involved in the biosynthesis of the chorismate, which leads to the biosynthesis of aromatic amino acids. Catalyzes the reversible NADPH linked reduction of 3-dehydroshikimate (DHSA) to yield shikimate (SA). The chain is Shikimate dehydrogenase (NADP(+)) from Brucella melitensis biotype 2 (strain ATCC 23457).